Reading from the N-terminus, the 233-residue chain is Coenzyme Q-binding protein COQ10 homolog, mitochondrial (233 aa).

A mitochondrion-targeting transit peptide spans 1-34 (MAEKATSLFLRAMEISEKQSFDVMRRNSSCTIRH).

This sequence belongs to the COQ10 family. Interacts with coenzyme Q.

The protein resides in the mitochondrion inner membrane. In terms of biological role, required for the function of coenzyme Q in the respiratory chain. May serve as a chaperone or may be involved in the transport of Q6 from its site of synthesis to the catalytic sites of the respiratory complexes. The sequence is that of Coenzyme Q-binding protein COQ10 homolog, mitochondrial from Danio rerio (Zebrafish).